The following is a 453-amino-acid chain: Tubulin gamma chain (453 aa).

142-148 (AGGTGSG) serves as a coordination point for GTP.

The protein belongs to the tubulin family.

The protein localises to the cytoplasm. Its subcellular location is the cytoskeleton. It is found in the microtubule organizing center. It localises to the spindle pole body. Its function is as follows. Tubulin is the major constituent of microtubules. The gamma chain is found at microtubule organizing centers (MTOC) such as the spindle poles or the centrosome, suggesting that it is involved in the minus-end nucleation of microtubule assembly. This is Tubulin gamma chain (TUB4) from Coprinopsis cinerea (strain Okayama-7 / 130 / ATCC MYA-4618 / FGSC 9003) (Inky cap fungus).